We begin with the raw amino-acid sequence, 298 residues long: Acetylglutamate kinase (298 aa).

Substrate is bound by residues 69–70, Arg91, and Asn196; that span reads GG.

This sequence belongs to the acetylglutamate kinase family. ArgB subfamily.

It localises to the cytoplasm. It catalyses the reaction N-acetyl-L-glutamate + ATP = N-acetyl-L-glutamyl 5-phosphate + ADP. The protein operates within amino-acid biosynthesis; L-arginine biosynthesis; N(2)-acetyl-L-ornithine from L-glutamate: step 2/4. Functionally, catalyzes the ATP-dependent phosphorylation of N-acetyl-L-glutamate. In Nitrobacter hamburgensis (strain DSM 10229 / NCIMB 13809 / X14), this protein is Acetylglutamate kinase.